A 28-amino-acid polypeptide reads, in one-letter code: Ranatuerin-2SEc (28 aa).

Cys-23 and Cys-28 are oxidised to a cystine.

In terms of tissue distribution, expressed by the skin glands.

Its subcellular location is the secreted. In terms of biological role, mast cell degranulating peptide. Causes histamine release from rat peritoneal mast cells in vitro. Has antibacterial activity against the Gram-negative bacterium E.coli K12 and Gram-positive bacterium M.luteus NCT C2665. In Lithobates sevosus (Dusky gopher frog), this protein is Ranatuerin-2SEc.